Reading from the N-terminus, the 78-residue chain is Large ribosomal subunit protein bL28 (78 aa).

Positions 1-21 (MARVCQVTGKGPMTGNNVSHA) are disordered.

This sequence belongs to the bacterial ribosomal protein bL28 family.

In Bordetella petrii (strain ATCC BAA-461 / DSM 12804 / CCUG 43448), this protein is Large ribosomal subunit protein bL28.